The following is a 408-amino-acid chain: Multifunctional CCA protein (408 aa).

Residues glycine 8 and arginine 11 each coordinate ATP. CTP contacts are provided by glycine 8 and arginine 11. Mg(2+)-binding residues include aspartate 21 and aspartate 23. Positions 91, 137, and 140 each coordinate ATP. Residues arginine 91, arginine 137, and arginine 140 each coordinate CTP. The HD domain maps to 228–329 (SGVHTLMVLE…VKLFDKADFW (102 aa)).

Belongs to the tRNA nucleotidyltransferase/poly(A) polymerase family. Bacterial CCA-adding enzyme type 1 subfamily. Monomer. Can also form homodimers and oligomers. Mg(2+) serves as cofactor. Ni(2+) is required as a cofactor.

The enzyme catalyses a tRNA precursor + 2 CTP + ATP = a tRNA with a 3' CCA end + 3 diphosphate. The catalysed reaction is a tRNA with a 3' CCA end + 2 CTP + ATP = a tRNA with a 3' CCACCA end + 3 diphosphate. Its function is as follows. Catalyzes the addition and repair of the essential 3'-terminal CCA sequence in tRNAs without using a nucleic acid template. Adds these three nucleotides in the order of C, C, and A to the tRNA nucleotide-73, using CTP and ATP as substrates and producing inorganic pyrophosphate. tRNA 3'-terminal CCA addition is required both for tRNA processing and repair. Also involved in tRNA surveillance by mediating tandem CCA addition to generate a CCACCA at the 3' terminus of unstable tRNAs. While stable tRNAs receive only 3'-terminal CCA, unstable tRNAs are marked with CCACCA and rapidly degraded. This is Multifunctional CCA protein from Shewanella piezotolerans (strain WP3 / JCM 13877).